A 62-amino-acid chain; its full sequence is MLQSMVQTGPEFLHQGTHLNLEFPAIQELLLTFLRKPIYWRIGMPNTSTLVIPKKMSLLLLL.

This is an uncharacterized protein from Solanum tuberosum (Potato).